The chain runs to 152 residues: TEEFRASEKQILDAKQAFCNVDKKKEGTVSCKDLGAIFKSLGLLVKDDKIKDWSDEMDEEATGRLNCDAWIQLFERKLKEDLDERELKEAFRVLDKEKKGVIKVDVLRWILSSLGDELTEEEIENMIAETDTDGSGTVDYEEFKCLMMSSDA.

An N-acetylthreonine modification is found at Thr1. 4 consecutive EF-hand domains span residues 9-44 (KQILDAKQAFCNVDKKKEGTVSCKDLGAIFKSLGLL), 45-80 (VKDDKIKDWSDEMDEEATGRLNCDAWIQLFERKLKE), 82-117 (LDERELKEAFRVLDKEKKGVIKVDVLRWILSSLGDE), and 118-152 (LTEEEIENMIAETDTDGSGTVDYEEFKCLMMSSDA). Ca(2+)-binding residues include Asp131, Asp133, Ser135, Thr137, and Glu142.

The protein belongs to the troponin C family.

Its function is as follows. Troponin is the central regulatory protein of striated muscle contraction. Tn consists of three components: Tn-I which is the inhibitor of actomyosin ATPase, Tn-T which contains the binding site for tropomyosin and Tn-C. The binding of calcium to Tn-C abolishes the inhibitory action of Tn on actin filaments. In Mizuhopecten yessoensis (Japanese scallop), this protein is Troponin C.